Consider the following 154-residue polypeptide: Aspartate carbamoyltransferase regulatory chain (154 aa).

Residues cysteine 109, cysteine 114, cysteine 138, and cysteine 141 each coordinate Zn(2+).

This sequence belongs to the PyrI family. In terms of assembly, contains catalytic and regulatory chains. Requires Zn(2+) as cofactor.

Its function is as follows. Involved in allosteric regulation of aspartate carbamoyltransferase. This is Aspartate carbamoyltransferase regulatory chain from Photorhabdus laumondii subsp. laumondii (strain DSM 15139 / CIP 105565 / TT01) (Photorhabdus luminescens subsp. laumondii).